The sequence spans 227 residues: Isoprenyl transferase (227 aa).

Residue aspartate 13 is part of the active site. Aspartate 13 contributes to the Mg(2+) binding site. Residues glycine 14–arginine 17, tryptophan 18, arginine 26, histidine 30, and serine 58–glutamate 60 contribute to the substrate site. Residue asparagine 61 is the Proton acceptor of the active site. Residues tryptophan 62, arginine 64, arginine 175, and arginine 181 to serine 183 each bind substrate. Glutamate 194 contributes to the Mg(2+) binding site.

The protein belongs to the UPP synthase family. As to quaternary structure, homodimer. The cofactor is Mg(2+).

Its function is as follows. Catalyzes the condensation of isopentenyl diphosphate (IPP) with allylic pyrophosphates generating different type of terpenoids. The chain is Isoprenyl transferase from Treponema denticola (strain ATCC 35405 / DSM 14222 / CIP 103919 / JCM 8153 / KCTC 15104).